Here is a 147-residue protein sequence, read N- to C-terminus: Transcriptional repressor NrdR (147 aa).

A zinc finger lies at 3–34; it reads CLFCRSDDTKVIDSRTSEDGISIRRRRECQLC. Positions 46-136 constitute an ATP-cone domain; sequence LTVIKRNGTS…VYQDFDSLED (91 aa).

Belongs to the NrdR family. Requires Zn(2+) as cofactor.

Functionally, negatively regulates transcription of bacterial ribonucleotide reductase nrd genes and operons by binding to NrdR-boxes. The sequence is that of Transcriptional repressor NrdR from Tropheryma whipplei (strain TW08/27) (Whipple's bacillus).